The following is a 492-amino-acid chain: Adenylyltransferase and sulfurtransferase uba4 (492 aa).

Residues G99, D120, 127 to 131 (SNLHR), K144, and 188 to 189 (DN) contribute to the ATP site. C237 and C240 together coordinate Zn(2+). Residue C254 is the Glycyl thioester intermediate; for adenylyltransferase activity of the active site. Residues C317 and C320 each coordinate Zn(2+). Positions 378-490 (GSKEPTIIDV…WREQIDPDWP (113 aa)) constitute a Rhodanese domain. C445 functions as the Cysteine persulfide intermediate; for sulfurtransferase activity in the catalytic mechanism.

This sequence in the N-terminal section; belongs to the HesA/MoeB/ThiF family. UBA4 subfamily. Requires Zn(2+) as cofactor.

It is found in the cytoplasm. It localises to the cytosol. It carries out the reaction [molybdopterin-synthase sulfur-carrier protein]-C-terminal Gly-Gly + ATP + H(+) = [molybdopterin-synthase sulfur-carrier protein]-C-terminal Gly-Gly-AMP + diphosphate. It catalyses the reaction [molybdopterin-synthase sulfur-carrier protein]-C-terminal Gly-Gly-AMP + S-sulfanyl-L-cysteinyl-[cysteine desulfurase] + AH2 = [molybdopterin-synthase sulfur-carrier protein]-C-terminal-Gly-aminoethanethioate + L-cysteinyl-[cysteine desulfurase] + A + AMP + 2 H(+). It functions in the pathway tRNA modification; 5-methoxycarbonylmethyl-2-thiouridine-tRNA biosynthesis. The protein operates within cofactor biosynthesis; molybdopterin biosynthesis. In terms of biological role, plays a central role in 2-thiolation of mcm(5)S(2)U at tRNA wobble positions of cytosolic tRNA(Lys), tRNA(Glu) and tRNA(Gln). Also essential during biosynthesis of the molybdenum cofactor. Acts by mediating the C-terminal thiocarboxylation of sulfur carriers urm1 and mocs2a. Its N-terminus first activates urm1 and mocs2a as acyl-adenylates (-COAMP), then the persulfide sulfur on the catalytic cysteine is transferred to urm1 and mocs2a to form thiocarboxylation (-COSH) of their C-terminus. The reaction probably involves hydrogen sulfide that is generated from the persulfide intermediate and that acts as a nucleophile towards urm1 and mocs2a. Subsequently, a transient disulfide bond is formed. Does not use thiosulfate as sulfur donor; nfs1 probably acting as a sulfur donor for thiocarboxylation reactions. This Aspergillus clavatus (strain ATCC 1007 / CBS 513.65 / DSM 816 / NCTC 3887 / NRRL 1 / QM 1276 / 107) protein is Adenylyltransferase and sulfurtransferase uba4.